The sequence spans 507 residues: Glucose-6-phosphate isomerase (507 aa).

Residue Glu-337 is the Proton donor of the active site. Active-site residues include His-368 and Lys-478.

It belongs to the GPI family.

It is found in the cytoplasm. The enzyme catalyses alpha-D-glucose 6-phosphate = beta-D-fructose 6-phosphate. Its pathway is carbohydrate biosynthesis; gluconeogenesis. The protein operates within carbohydrate degradation; glycolysis; D-glyceraldehyde 3-phosphate and glycerone phosphate from D-glucose: step 2/4. Functionally, catalyzes the reversible isomerization of glucose-6-phosphate to fructose-6-phosphate. The polypeptide is Glucose-6-phosphate isomerase (Novosphingobium aromaticivorans (strain ATCC 700278 / DSM 12444 / CCUG 56034 / CIP 105152 / NBRC 16084 / F199)).